A 226-amino-acid polypeptide reads, in one-letter code: Cytidylate kinase (226 aa).

10-18 (GPAGAGKST) lines the ATP pocket.

The protein belongs to the cytidylate kinase family. Type 1 subfamily.

The protein localises to the cytoplasm. It catalyses the reaction CMP + ATP = CDP + ADP. The catalysed reaction is dCMP + ATP = dCDP + ADP. In Caldicellulosiruptor bescii (strain ATCC BAA-1888 / DSM 6725 / KCTC 15123 / Z-1320) (Anaerocellum thermophilum), this protein is Cytidylate kinase.